A 359-amino-acid polypeptide reads, in one-letter code: Peptide chain release factor 1 (359 aa).

Position 235 is an N5-methylglutamine (glutamine 235).

This sequence belongs to the prokaryotic/mitochondrial release factor family. Methylated by PrmC. Methylation increases the termination efficiency of RF1.

It localises to the cytoplasm. Functionally, peptide chain release factor 1 directs the termination of translation in response to the peptide chain termination codons UAG and UAA. This chain is Peptide chain release factor 1, found in Chelativorans sp. (strain BNC1).